The primary structure comprises 65 residues: Large ribosomal subunit protein uL29 (65 aa).

It belongs to the universal ribosomal protein uL29 family.

This chain is Large ribosomal subunit protein uL29, found in Buchnera aphidicola subsp. Schizaphis graminum (strain Sg).